Reading from the N-terminus, the 429-residue chain is Ribosomal RNA small subunit methyltransferase B (429 aa).

Residues 254–260 (CAAPGGK), Asp-277, Asp-303, and Asp-322 each bind S-adenosyl-L-methionine. Residue Cys-375 is the Nucleophile of the active site.

The protein belongs to the class I-like SAM-binding methyltransferase superfamily. RsmB/NOP family.

The protein resides in the cytoplasm. The enzyme catalyses cytidine(967) in 16S rRNA + S-adenosyl-L-methionine = 5-methylcytidine(967) in 16S rRNA + S-adenosyl-L-homocysteine + H(+). Its function is as follows. Specifically methylates the cytosine at position 967 (m5C967) of 16S rRNA. The sequence is that of Ribosomal RNA small subunit methyltransferase B from Shigella boydii serotype 4 (strain Sb227).